A 303-amino-acid chain; its full sequence is Ornithine carbamoyltransferase (303 aa).

Residues 53–56, Q80, R104, and 131–134 contribute to the carbamoyl phosphate site; these read STRT and HPCQ. L-ornithine is bound by residues N162, D222, and 226–227; that span reads SM. Carbamoyl phosphate contacts are provided by residues 261 to 262 and R289; that span reads CL.

The protein belongs to the aspartate/ornithine carbamoyltransferase superfamily. OTCase family.

Its subcellular location is the cytoplasm. The enzyme catalyses carbamoyl phosphate + L-ornithine = L-citrulline + phosphate + H(+). It functions in the pathway amino-acid biosynthesis; L-arginine biosynthesis; L-arginine from L-ornithine and carbamoyl phosphate: step 1/3. Its function is as follows. Reversibly catalyzes the transfer of the carbamoyl group from carbamoyl phosphate (CP) to the N(epsilon) atom of ornithine (ORN) to produce L-citrulline. The protein is Ornithine carbamoyltransferase of Mesorhizobium japonicum (strain LMG 29417 / CECT 9101 / MAFF 303099) (Mesorhizobium loti (strain MAFF 303099)).